The sequence spans 142 residues: Large ribosomal subunit protein uL11 (142 aa).

The protein belongs to the universal ribosomal protein uL11 family. As to quaternary structure, part of the ribosomal stalk of the 50S ribosomal subunit. Interacts with L10 and the large rRNA to form the base of the stalk. L10 forms an elongated spine to which L12 dimers bind in a sequential fashion forming a multimeric L10(L12)X complex. One or more lysine residues are methylated.

Forms part of the ribosomal stalk which helps the ribosome interact with GTP-bound translation factors. The chain is Large ribosomal subunit protein uL11 from Magnetococcus marinus (strain ATCC BAA-1437 / JCM 17883 / MC-1).